A 221-amino-acid chain; its full sequence is Putative transmembrane protein ORF25 (221 aa).

An N-terminal signal peptide occupies residues 1 to 23 (MTLAAKLIVLVYVALCFVNESTS). N-linked (GlcNAc...) asparagine; by host glycosylation is found at N19 and N179. The Extracellular segment spans residues 24–191 (QDHSNIYHET…LAKARGVPMS (168 aa)). Residues 192–212 (VSVISGICAIILVIFPIFITI) form a helical membrane-spanning segment. Residues 213–221 (ANLRRVYLH) lie on the Cytoplasmic side of the membrane.

It is found in the host membrane. The polypeptide is Putative transmembrane protein ORF25 (Ostreid herpesvirus 1 (isolate France) (OsHV-1)).